Consider the following 305-residue polypeptide: Homoserine O-acetyltransferase (305 aa).

Cys142 functions as the Acyl-thioester intermediate in the catalytic mechanism. Residues Lys163 and Ser192 each coordinate substrate. The Proton acceptor role is filled by His235. Residue Glu237 is part of the active site. Residue Arg249 coordinates substrate.

This sequence belongs to the MetA family.

The protein localises to the cytoplasm. It catalyses the reaction L-homoserine + acetyl-CoA = O-acetyl-L-homoserine + CoA. It functions in the pathway amino-acid biosynthesis; L-methionine biosynthesis via de novo pathway; O-acetyl-L-homoserine from L-homoserine: step 1/1. In terms of biological role, transfers an acetyl group from acetyl-CoA to L-homoserine, forming acetyl-L-homoserine. The chain is Homoserine O-acetyltransferase from Bacteroides fragilis (strain YCH46).